The primary structure comprises 197 residues: Small ribosomal subunit protein uS4c (197 aa).

The region spanning 85-157 is the S4 RNA-binding domain; sequence MRLDNILFRL…LQLFTGKELA (73 aa).

It belongs to the universal ribosomal protein uS4 family. As to quaternary structure, part of the 30S ribosomal subunit. Contacts protein S5. The interaction surface between S4 and S5 is involved in control of translational fidelity.

It is found in the plastid. One of the primary rRNA binding proteins, it binds directly to 16S rRNA where it nucleates assembly of the body of the 30S subunit. In terms of biological role, with S5 and S12 plays an important role in translational accuracy. This is Small ribosomal subunit protein uS4c (rps4) from Cuscuta gronovii (Common dodder).